Reading from the N-terminus, the 225-residue chain is Urease accessory protein UreF (225 aa).

The protein belongs to the UreF family. UreD, UreF and UreG form a complex that acts as a GTP-hydrolysis-dependent molecular chaperone, activating the urease apoprotein by helping to assemble the nickel containing metallocenter of UreC. The UreE protein probably delivers the nickel.

It is found in the cytoplasm. Its function is as follows. Required for maturation of urease via the functional incorporation of the urease nickel metallocenter. The protein is Urease accessory protein UreF of Arthrobacter sp. (strain FB24).